A 547-amino-acid chain; its full sequence is T-complex protein 1 subunit alpha (547 aa).

The protein belongs to the TCP-1 chaperonin family. As to quaternary structure, heterooligomeric complex of about 850 to 900 kDa that forms two stacked rings, 12 to 16 nm in diameter.

Its subcellular location is the cytoplasm. Molecular chaperone; assists the folding of proteins upon ATP hydrolysis. Known to play a role, in vitro, in the folding of actin and tubulin. This chain is T-complex protein 1 subunit alpha, found in Tetrahymena pyriformis.